A 200-amino-acid chain; its full sequence is Cytochrome c biogenesis ATP-binding export protein CcmA (200 aa).

An ABC transporter domain is found at Met-1–Ala-200. Gly-35–Thr-42 serves as a coordination point for ATP.

This sequence belongs to the ABC transporter superfamily. CcmA exporter (TC 3.A.1.107) family. As to quaternary structure, the complex is composed of two ATP-binding proteins (CcmA) and two transmembrane proteins (CcmB).

It localises to the cell inner membrane. The enzyme catalyses heme b(in) + ATP + H2O = heme b(out) + ADP + phosphate + H(+). Part of the ABC transporter complex CcmAB involved in the biogenesis of c-type cytochromes; once thought to export heme, this seems not to be the case, but its exact role is uncertain. Responsible for energy coupling to the transport system. This chain is Cytochrome c biogenesis ATP-binding export protein CcmA, found in Rhodopseudomonas palustris (strain HaA2).